Reading from the N-terminus, the 129-residue chain is Large ribosomal subunit protein uL22 (129 aa).

Belongs to the universal ribosomal protein uL22 family. In terms of assembly, part of the 50S ribosomal subunit.

In terms of biological role, this protein binds specifically to 23S rRNA; its binding is stimulated by other ribosomal proteins, e.g. L4, L17, and L20. It is important during the early stages of 50S assembly. It makes multiple contacts with different domains of the 23S rRNA in the assembled 50S subunit and ribosome. Functionally, the globular domain of the protein is located near the polypeptide exit tunnel on the outside of the subunit, while an extended beta-hairpin is found that lines the wall of the exit tunnel in the center of the 70S ribosome. The protein is Large ribosomal subunit protein uL22 of Mesorhizobium japonicum (strain LMG 29417 / CECT 9101 / MAFF 303099) (Mesorhizobium loti (strain MAFF 303099)).